A 219-amino-acid chain; its full sequence is MRRPGAVVRRAGGYVTNLMPSAAGEPSIGGGLGDQVYNRLLGERIIFLGQPVDDDIANKITAQLLLLASDPDKDIFLYINSPGGSITAGMAIYDTMQYIKNDVVTIAMGLAASMGQFLLSAGTPGKRFALPNAEILIHQPSAGLAGSASDIKIHAERLLHTKRRMAELTSQHTGQTIEQITRDSDRDRWFDAFEAKEYGLIDDVIATAAGMPGGGGTGA.

Residue Ser-113 is the Nucleophile of the active site. The active site involves His-138.

It belongs to the peptidase S14 family. Fourteen ClpP subunits assemble into 2 heptameric rings which stack back to back to give a disk-like structure with a central cavity, resembling the structure of eukaryotic proteasomes.

The protein localises to the cytoplasm. The enzyme catalyses Hydrolysis of proteins to small peptides in the presence of ATP and magnesium. alpha-casein is the usual test substrate. In the absence of ATP, only oligopeptides shorter than five residues are hydrolyzed (such as succinyl-Leu-Tyr-|-NHMec, and Leu-Tyr-Leu-|-Tyr-Trp, in which cleavage of the -Tyr-|-Leu- and -Tyr-|-Trp bonds also occurs).. Cleaves peptides in various proteins in a process that requires ATP hydrolysis. Has a chymotrypsin-like activity. Plays a major role in the degradation of misfolded proteins. Probably partially responsible for degradation of ECF sigma factor SigR prime. This is ATP-dependent Clp protease proteolytic subunit 1 from Streptomyces coelicolor (strain ATCC BAA-471 / A3(2) / M145).